The following is a 629-amino-acid chain: tRNA uridine 5-carboxymethylaminomethyl modification enzyme MnmG (629 aa).

4-9 (GGGHAG) is a binding site for FAD. An NAD(+)-binding site is contributed by 268 to 282 (GPRYCPSIEDKVNRF).

This sequence belongs to the MnmG family. As to quaternary structure, homodimer. Heterotetramer of two MnmE and two MnmG subunits. FAD serves as cofactor.

It localises to the cytoplasm. Its function is as follows. NAD-binding protein involved in the addition of a carboxymethylaminomethyl (cmnm) group at the wobble position (U34) of certain tRNAs, forming tRNA-cmnm(5)s(2)U34. This chain is tRNA uridine 5-carboxymethylaminomethyl modification enzyme MnmG, found in Helicobacter hepaticus (strain ATCC 51449 / 3B1).